The primary structure comprises 122 residues: Large ribosomal subunit protein uL14c (122 aa).

This sequence belongs to the universal ribosomal protein uL14 family. As to quaternary structure, part of the 50S ribosomal subunit.

It localises to the plastid. The protein localises to the chloroplast. Functionally, binds to 23S rRNA. The protein is Large ribosomal subunit protein uL14c of Cucumis sativus (Cucumber).